Reading from the N-terminus, the 89-residue chain is Small ribosomal subunit protein uS19 (89 aa).

The protein belongs to the universal ribosomal protein uS19 family.

Its function is as follows. Protein S19 forms a complex with S13 that binds strongly to the 16S ribosomal RNA. The protein is Small ribosomal subunit protein uS19 of Xylella fastidiosa (strain 9a5c).